The chain runs to 336 residues: Ornithine carbamoyltransferase, catabolic (336 aa).

Residues 57–60 (STRT), Gln84, Arg108, and 135–138 (HPTQ) each bind carbamoyl phosphate. Residues Asn168, Asp232, and 236 to 237 (SM) contribute to the L-ornithine site. Residues 274 to 275 (CL) and Arg321 each bind carbamoyl phosphate.

It belongs to the aspartate/ornithine carbamoyltransferase superfamily. OTCase family.

Its subcellular location is the cytoplasm. The enzyme catalyses carbamoyl phosphate + L-ornithine = L-citrulline + phosphate + H(+). Its pathway is amino-acid degradation; L-arginine degradation via ADI pathway; carbamoyl phosphate from L-arginine: step 2/2. In terms of biological role, reversibly catalyzes the transfer of the carbamoyl group from carbamoyl phosphate (CP) to the N(epsilon) atom of ornithine (ORN) to produce L-citrulline. The chain is Ornithine carbamoyltransferase, catabolic (arcB) from Ectopseudomonas mendocina (Pseudomonas mendocina).